Consider the following 542-residue polypeptide: CTP synthase (542 aa).

The interval 1-265 (MTKFVFVTGG…DEIVCHKLNL (265 aa)) is amidoligase domain. Residue S13 coordinates CTP. S13 contacts UTP. ATP-binding positions include 14-19 (SLGKGI) and D71. Mg(2+) contacts are provided by D71 and E139. CTP-binding positions include 146 to 148 (DIE), 186 to 191 (KTKPTQ), and K222. Residues 186–191 (KTKPTQ) and K222 each bind UTP. Positions 290-542 (NVAFVGKYVD…IAAALANRKA (253 aa)) constitute a Glutamine amidotransferase type-1 domain. An L-glutamine-binding site is contributed by G351. The active-site Nucleophile; for glutamine hydrolysis is the C378. L-glutamine is bound by residues 379-382 (LGMQ), E402, and R468. Active-site residues include H515 and E517.

The protein belongs to the CTP synthase family. Homotetramer.

The catalysed reaction is UTP + L-glutamine + ATP + H2O = CTP + L-glutamate + ADP + phosphate + 2 H(+). It carries out the reaction L-glutamine + H2O = L-glutamate + NH4(+). It catalyses the reaction UTP + NH4(+) + ATP = CTP + ADP + phosphate + 2 H(+). It participates in pyrimidine metabolism; CTP biosynthesis via de novo pathway; CTP from UDP: step 2/2. With respect to regulation, allosterically activated by GTP, when glutamine is the substrate; GTP has no effect on the reaction when ammonia is the substrate. The allosteric effector GTP functions by stabilizing the protein conformation that binds the tetrahedral intermediate(s) formed during glutamine hydrolysis. Inhibited by the product CTP, via allosteric rather than competitive inhibition. In terms of biological role, catalyzes the ATP-dependent amination of UTP to CTP with either L-glutamine or ammonia as the source of nitrogen. Regulates intracellular CTP levels through interactions with the four ribonucleotide triphosphates. The chain is CTP synthase from Methylobacillus flagellatus (strain ATCC 51484 / DSM 6875 / VKM B-1610 / KT).